The following is a 500-amino-acid chain: Na(+)/H(+) antiporter NhaB (500 aa).

Transmembrane regions (helical) follow at residues 28-50, 68-88, 98-118, 121-141, 145-165, 205-225, 244-264, 311-331, 350-370, 394-414, 449-469, and 477-497; these read FLLL…VLVG, GGLL…ALYA, LLLM…LLLF, LLLG…LAAL, FLDA…FFAV, LLMH…VGEP, QVAP…VLLE, VLIV…LLVI, FQEA…VAVI, MLFI…VATI, VATP…IAPL, and MVWM…WAVS.

The protein belongs to the NhaB Na(+)/H(+) (TC 2.A.34) antiporter family.

The protein resides in the cell inner membrane. The enzyme catalyses 2 Na(+)(in) + 3 H(+)(out) = 2 Na(+)(out) + 3 H(+)(in). Functionally, na(+)/H(+) antiporter that extrudes sodium in exchange for external protons. In Pseudomonas aeruginosa (strain UCBPP-PA14), this protein is Na(+)/H(+) antiporter NhaB.